A 316-amino-acid chain; its full sequence is Porphobilinogen deaminase (316 aa).

Residue Cys-245 is modified to S-(dipyrrolylmethanemethyl)cysteine.

It belongs to the HMBS family. In terms of assembly, monomer. Dipyrromethane is required as a cofactor.

The enzyme catalyses 4 porphobilinogen + H2O = hydroxymethylbilane + 4 NH4(+). It functions in the pathway porphyrin-containing compound metabolism; protoporphyrin-IX biosynthesis; coproporphyrinogen-III from 5-aminolevulinate: step 2/4. It participates in porphyrin-containing compound metabolism; chlorophyll biosynthesis. In terms of biological role, tetrapolymerization of the monopyrrole PBG into the hydroxymethylbilane pre-uroporphyrinogen in several discrete steps. This Synechococcus sp. (strain CC9311) protein is Porphobilinogen deaminase.